We begin with the raw amino-acid sequence, 589 residues long: Peroxisomal biogenesis factor 8 (589 aa).

The Microbody targeting signal motif lies at 587 to 589 (SKL).

The protein resides in the peroxisome matrix. Functionally, required for peroxisome assembly. This is Peroxisomal biogenesis factor 8 (PEX8) from Saccharomyces cerevisiae (strain ATCC 204508 / S288c) (Baker's yeast).